The sequence spans 371 residues: Mitogen-activated protein kinase homolog NTF6 (371 aa).

A Protein kinase domain is found at 38–324 (IPPIQPVGRG…VEDALNHPFL (287 aa)). ATP is bound by residues 44–52 (VGRGAYGMV) and Lys-67. The active-site Proton acceptor is the Asp-164. Thr-196 is modified (phosphothreonine). Positions 196-198 (TEY) match the TXY motif. Tyr-198 is modified (phosphotyrosine).

It belongs to the protein kinase superfamily. CMGC Ser/Thr protein kinase family. MAP kinase subfamily. Mg(2+) serves as cofactor. Dually phosphorylated on Thr-196 and Tyr-198, which activates the enzyme. Very low autophosphorylation, although dramatically increased when Mn(2+) is added to the reaction instead of Mg(2+).

It carries out the reaction L-seryl-[protein] + ATP = O-phospho-L-seryl-[protein] + ADP + H(+). The catalysed reaction is L-threonyl-[protein] + ATP = O-phospho-L-threonyl-[protein] + ADP + H(+). Activated by tyrosine and threonine phosphorylation. This Nicotiana tabacum (Common tobacco) protein is Mitogen-activated protein kinase homolog NTF6 (NTF6).